The primary structure comprises 326 residues: Probable cell division protein WhiA (326 aa).

The H-T-H motif DNA-binding region spans 275–308; the sequence is SLDELGRLADPPMTKDAIAGRIRRLLAMADKRAS.

This sequence belongs to the WhiA family.

In terms of biological role, involved in cell division and chromosome segregation. In Renibacterium salmoninarum (strain ATCC 33209 / DSM 20767 / JCM 11484 / NBRC 15589 / NCIMB 2235), this protein is Probable cell division protein WhiA.